A 165-amino-acid polypeptide reads, in one-letter code: 3-isopropylmalate dehydratase small subunit (165 aa).

It belongs to the LeuD family. LeuD type 2 subfamily. Heterodimer of LeuC and LeuD.

It catalyses the reaction (2R,3S)-3-isopropylmalate = (2S)-2-isopropylmalate. It functions in the pathway amino-acid biosynthesis; L-leucine biosynthesis; L-leucine from 3-methyl-2-oxobutanoate: step 2/4. Catalyzes the isomerization between 2-isopropylmalate and 3-isopropylmalate, via the formation of 2-isopropylmaleate. The sequence is that of 3-isopropylmalate dehydratase small subunit from Saccharolobus islandicus (strain M.16.27) (Sulfolobus islandicus).